The chain runs to 225 residues: Enolase-phosphatase E1 (225 aa).

This sequence belongs to the HAD-like hydrolase superfamily. MasA/MtnC family. Monomer. Mg(2+) serves as cofactor.

The catalysed reaction is 5-methylsulfanyl-2,3-dioxopentyl phosphate + H2O = 1,2-dihydroxy-5-(methylsulfanyl)pent-1-en-3-one + phosphate. It participates in amino-acid biosynthesis; L-methionine biosynthesis via salvage pathway; L-methionine from S-methyl-5-thio-alpha-D-ribose 1-phosphate: step 3/6. The protein operates within amino-acid biosynthesis; L-methionine biosynthesis via salvage pathway; L-methionine from S-methyl-5-thio-alpha-D-ribose 1-phosphate: step 4/6. In terms of biological role, bifunctional enzyme that catalyzes the enolization of 2,3-diketo-5-methylthiopentyl-1-phosphate (DK-MTP-1-P) into the intermediate 2-hydroxy-3-keto-5-methylthiopentenyl-1-phosphate (HK-MTPenyl-1-P), which is then dephosphorylated to form the acireductone 1,2-dihydroxy-3-keto-5-methylthiopentene (DHK-MTPene). This chain is Enolase-phosphatase E1, found in Shewanella loihica (strain ATCC BAA-1088 / PV-4).